A 404-amino-acid chain; its full sequence is Argininosuccinate synthase (404 aa).

ATP contacts are provided by residues 12-20 and alanine 39; that span reads AYSGGLDTS. Residues tyrosine 91 and serine 96 each coordinate L-citrulline. Glycine 121 provides a ligand contact to ATP. L-aspartate-binding residues include threonine 123, asparagine 127, and aspartate 128. L-citrulline is bound at residue asparagine 127. Positions 131, 180, 189, 265, and 277 each coordinate L-citrulline.

The protein belongs to the argininosuccinate synthase family. Type 1 subfamily. Homotetramer.

The protein localises to the cytoplasm. The enzyme catalyses L-citrulline + L-aspartate + ATP = 2-(N(omega)-L-arginino)succinate + AMP + diphosphate + H(+). Its pathway is amino-acid biosynthesis; L-arginine biosynthesis; L-arginine from L-ornithine and carbamoyl phosphate: step 2/3. The sequence is that of Argininosuccinate synthase from Vibrio parahaemolyticus serotype O3:K6 (strain RIMD 2210633).